The chain runs to 219 residues: Orotate phosphoribosyltransferase (219 aa).

K26 contributes to the 5-phospho-alpha-D-ribose 1-diphosphate binding site. 34 to 35 contacts orotate; sequence FF. 5-phospho-alpha-D-ribose 1-diphosphate-binding positions include 72–73, R98, K99, K102, H104, and 124–132; these read YK and DDVITAGTA. Residues T128 and R156 each contribute to the orotate site.

Belongs to the purine/pyrimidine phosphoribosyltransferase family. PyrE subfamily. As to quaternary structure, homodimer. Mg(2+) serves as cofactor.

The enzyme catalyses orotidine 5'-phosphate + diphosphate = orotate + 5-phospho-alpha-D-ribose 1-diphosphate. Its pathway is pyrimidine metabolism; UMP biosynthesis via de novo pathway; UMP from orotate: step 1/2. In terms of biological role, catalyzes the transfer of a ribosyl phosphate group from 5-phosphoribose 1-diphosphate to orotate, leading to the formation of orotidine monophosphate (OMP). In Xylella fastidiosa (strain M23), this protein is Orotate phosphoribosyltransferase.